A 666-amino-acid chain; its full sequence is Frizzled-3 (666 aa).

The N-terminal stretch at 1–22 (MAMTWIVFSLWPLTVFMGHIGG) is a signal peptide. The 114-residue stretch at 23–136 (HSLFSCEPIT…CSRFPDCDEP (114 aa)) folds into the FZ domain. The Extracellular segment spans residues 23 to 205 (HSLFSCEPIT…REELSFARYF (183 aa)). Intrachain disulfides connect Cys-28/Cys-89, Cys-36/Cys-82, Cys-73/Cys-110, Cys-99/Cys-133, and Cys-103/Cys-127. N-linked (GlcNAc...) asparagine glycosylation occurs at Asn-42. Residues 206 to 226 (IGLISIICLSATLFTFLTFLI) traverse the membrane as a helical segment. At 227–237 (DVTRFRYPERP) the chain is on the cytoplasmic side. The chain crosses the membrane as a helical span at residues 238-258 (IIFYAVCYMMVSLIFFIGFLL). At 259 to 288 (EDRVACNASIPAQYKASTVTQGSHNKACTM) the chain is on the extracellular side. An N-linked (GlcNAc...) asparagine glycan is attached at Asn-265. A helical transmembrane segment spans residues 289–309 (LFMILYFFTMAGSVWWVILTI). Topologically, residues 310–328 (TWFLAAVPKWGSEAIEKKA) are cytoplasmic. A helical transmembrane segment spans residues 329–349 (LLFHASAWGIPGTLTIILLAM). Topologically, residues 350-374 (NKIEGDNISGVCFVGLYDVDALRYF) are extracellular. Asn-356 carries an N-linked (GlcNAc...) asparagine glycan. A helical membrane pass occupies residues 375–395 (VLAPLCLYVVVGVSLLLAGII). Residues 396–420 (SLNRVRIEIPLEKENQDKLVKFMIR) lie on the Cytoplasmic side of the membrane. A helical membrane pass occupies residues 421–441 (IGVFSILYLVPLLVVIGCYFY). Residues 442–477 (EQAYRGIWETTWIQERCREYHIPCPYQVTQMSRPDL) are Extracellular-facing. Residues 478 to 498 (ILFLMKYLMALIVGIPSVFWV) traverse the membrane as a helical segment. The Cytoplasmic segment spans residues 499–666 (GSKKTCFEWA…RVIEEDGTSA (168 aa)). The Lys-Thr-X-X-X-Trp motif, mediates interaction with the PDZ domain of Dvl family members signature appears at 502-507 (KTCFEW). The tract at residues 538 to 666 (RDPNTPIIRK…RVIEEDGTSA (129 aa)) is disordered. Over residues 550-565 (GTSTQGTSTHASSTQL) the composition is skewed to polar residues. Residues 617–638 (LTDHSRHSSSHRLNEQSRHSSI) are compositionally biased toward basic and acidic residues. The span at 639-656 (RDLSNNPMTHITHGTSMN) shows a compositional bias: polar residues.

The protein belongs to the G-protein coupled receptor Fz/Smo family. As to quaternary structure, interacts with VANGL2. Ubiquitinated by ZNRF3, leading to its degradation by the proteasome. In terms of tissue distribution, widely expressed. Relatively high expression in the CNS, including regions of the limbic system, in kidney, pancreas, skeletal muscle, uterus and testis.

The protein resides in the membrane. It is found in the cell membrane. It localises to the cell surface. Its subcellular location is the apical cell membrane. Receptor for Wnt proteins. Most of frizzled receptors are coupled to the beta-catenin canonical signaling pathway, which leads to the activation of disheveled proteins, inhibition of GSK-3 kinase, nuclear accumulation of beta-catenin and activation of Wnt target genes. A second signaling pathway involving PKC and calcium fluxes has been seen for some family members, but it is not yet clear if it represents a distinct pathway or if it can be integrated in the canonical pathway, as PKC seems to be required for Wnt-mediated inactivation of GSK-3 kinase. Both pathways seem to involve interactions with G-proteins. Activation by Wnt5A stimulates PKC activity via a G-protein-dependent mechanism. Involved in transduction and intercellular transmission of polarity information during tissue morphogenesis and/or in differentiated tissues. Plays a role in controlling early axon growth and guidance processes necessary for the formation of a subset of central and peripheral major fiber tracts. Required for the development of major fiber tracts in the central nervous system, including: the anterior commissure, the corpus callosum, the thalamocortical, corticothalamic and nigrostriatal tracts, the corticospinal tract, the fasciculus retroflexus, the mammillothalamic tract, the medial lemniscus, and ascending fiber tracts from the spinal cord to the brain. In the peripheral nervous system, controls axon growth in distinct populations of cranial and spinal motor neurons, including the facial branchimotor nerve, the hypoglossal nerve, the phrenic nerve, and motor nerves innervating dorsal limbs. Involved in the migration of cranial neural crest cells. May also be implicated in the transmission of sensory information from the trunk and limbs to the brain. Controls commissural sensory axons guidance after midline crossing along the anterior-posterior axis in the developing spinal cord in a Wnt-dependent signaling pathway. Together with FZD6, is involved in the neural tube closure and plays a role in the regulation of the establishment of planar cell polarity (PCP), particularly in the orientation of asymmetric bundles of stereocilia on the apical faces of a subset of auditory and vestibular sensory cells located in the inner ear. Promotes neurogenesis by maintaining sympathetic neuroblasts within the cell cycle in a beta-catenin-dependent manner. The protein is Frizzled-3 (FZD3) of Homo sapiens (Human).